The chain runs to 180 residues: Crossover junction endodeoxyribonuclease RuvC (180 aa).

Catalysis depends on residues Asp-7, Glu-66, and Asp-138. Residues Asp-7, Glu-66, and Asp-138 each contribute to the Mg(2+) site.

The protein belongs to the RuvC family. In terms of assembly, homodimer which binds Holliday junction (HJ) DNA. The HJ becomes 2-fold symmetrical on binding to RuvC with unstacked arms; it has a different conformation from HJ DNA in complex with RuvA. In the full resolvosome a probable DNA-RuvA(4)-RuvB(12)-RuvC(2) complex forms which resolves the HJ. Requires Mg(2+) as cofactor.

The protein localises to the cytoplasm. The enzyme catalyses Endonucleolytic cleavage at a junction such as a reciprocal single-stranded crossover between two homologous DNA duplexes (Holliday junction).. Its function is as follows. The RuvA-RuvB-RuvC complex processes Holliday junction (HJ) DNA during genetic recombination and DNA repair. Endonuclease that resolves HJ intermediates. Cleaves cruciform DNA by making single-stranded nicks across the HJ at symmetrical positions within the homologous arms, yielding a 5'-phosphate and a 3'-hydroxyl group; requires a central core of homology in the junction. The consensus cleavage sequence is 5'-(A/T)TT(C/G)-3'. Cleavage occurs on the 3'-side of the TT dinucleotide at the point of strand exchange. HJ branch migration catalyzed by RuvA-RuvB allows RuvC to scan DNA until it finds its consensus sequence, where it cleaves and resolves the cruciform DNA. This chain is Crossover junction endodeoxyribonuclease RuvC, found in Herminiimonas arsenicoxydans.